Consider the following 199-residue polypeptide: Probable molybdenum cofactor guanylyltransferase (199 aa).

Residues 6–8, K18, D65, and D97 each bind GTP; that span reads LAG. Residue D97 participates in Mg(2+) binding.

This sequence belongs to the MobA family. The cofactor is Mg(2+).

It localises to the cytoplasm. It carries out the reaction Mo-molybdopterin + GTP + H(+) = Mo-molybdopterin guanine dinucleotide + diphosphate. Transfers a GMP moiety from GTP to Mo-molybdopterin (Mo-MPT) cofactor (Moco or molybdenum cofactor) to form Mo-molybdopterin guanine dinucleotide (Mo-MGD) cofactor. In Staphylococcus aureus (strain Mu50 / ATCC 700699), this protein is Probable molybdenum cofactor guanylyltransferase.